The primary structure comprises 118 residues: Ribosome-binding factor A (118 aa).

Belongs to the RbfA family. Monomer. Binds 30S ribosomal subunits, but not 50S ribosomal subunits or 70S ribosomes.

It localises to the cytoplasm. One of several proteins that assist in the late maturation steps of the functional core of the 30S ribosomal subunit. Associates with free 30S ribosomal subunits (but not with 30S subunits that are part of 70S ribosomes or polysomes). Required for efficient processing of 16S rRNA. May interact with the 5'-terminal helix region of 16S rRNA. This is Ribosome-binding factor A from Bacillus thuringiensis (strain Al Hakam).